Here is a 203-residue protein sequence, read N- to C-terminus: Large ribosomal subunit protein uL13 (203 aa).

N-acetylalanine is present on Ala-2. At Arg-59 the chain carries Citrulline. Position 77 is a phosphoserine (Ser-77). Citrulline is present on Arg-140. N6-acetyllysine is present on Lys-191.

This sequence belongs to the universal ribosomal protein uL13 family. Component of the 60S ribosome. Component of the GAIT complex. Interacts with EIF4G1. In terms of processing, phosphorylation at Ser-77 upon interferon-gamma treatment in macrophages involves a DAPK1-DAPK3 kinase cascade and is causing release from the ribosome, association with the GAIT complex and subsequent involvement in transcript-selective translation inhibition. Citrullinated by PADI4.

It localises to the cytoplasm. Associated with ribosomes but is not required for canonical ribosome function and has extra-ribosomal functions. Component of the GAIT (gamma interferon-activated inhibitor of translation) complex which mediates interferon-gamma-induced transcript-selective translation inhibition in inflammation processes. Upon interferon-gamma activation and subsequent phosphorylation dissociates from the ribosome and assembles into the GAIT complex which binds to stem loop-containing GAIT elements in the 3'-UTR of diverse inflammatory mRNAs (such as ceruplasmin) and suppresses their translation. In the GAIT complex interacts with m7G cap-bound eIF4G at or near the eIF3-binding site and blocks the recruitment of the 43S ribosomal complex. Involved in methylation of rRNA. The chain is Large ribosomal subunit protein uL13 (RPL13A) from Bos taurus (Bovine).